Reading from the N-terminus, the 478-residue chain is E3 ubiquitin-protein ligase makorin-1 (478 aa).

C3H1-type zinc fingers lie at residues 51 to 78, 80 to 107, and 204 to 231; these read WTKQVTCRYFMHGVCKKGNNCRYSHDLS, SQSAMVCRYYQRGCCAYGDRCRYEHTKP, and EMKKQLCPYAAVGECRYGENCVYLHGDA. Residues 232 to 259 are makorin-type Cys-His; it reads CDMCGLQVLHPVDAAQRSQHIKSCIEAH. The RING-type zinc finger occupies 277 to 331; it reads CGICMEVVYEKANPSERRFGILSNCNHTYCLKCIRKWRSAKQFESKIIKSCPECR. The C3H1-type 4 zinc-finger motif lies at 360-389; sequence AMSNKPCRYFDEGRGSCPFGGNCFYKHAYP.

As to quaternary structure, interacts with p53/TP53 and CDKN1A. Interacts with TERT, modulating telomere length homeostasis. Auto-ubiquitinated; which leads to proteasomal degradation.

The enzyme catalyses S-ubiquitinyl-[E2 ubiquitin-conjugating enzyme]-L-cysteine + [acceptor protein]-L-lysine = [E2 ubiquitin-conjugating enzyme]-L-cysteine + N(6)-ubiquitinyl-[acceptor protein]-L-lysine.. The protein operates within protein modification; protein ubiquitination. E3 ubiquitin ligase catalyzing the covalent attachment of ubiquitin moieties onto substrate proteins. These substrates include FILIP1, p53/TP53, CDKN1A and TERT. Keeps cells alive by suppressing p53/TP53 under normal conditions, but stimulates apoptosis by repressing CDKN1A under stress conditions. Acts as a negative regulator of telomerase. Has negative and positive effects on RNA polymerase II-dependent transcription. This Notamacropus eugenii (Tammar wallaby) protein is E3 ubiquitin-protein ligase makorin-1 (MKRN1).